The sequence spans 214 residues: MSTLASSASVFLVHPPLPPSPPQAGNHSYLTTLGFGYSIAIALGFLVLLSTVLLSSYICCRDSRRRTTAVESTGDRGGSVILPRIIFVAEEDNEDLEAGDVVVGLDQAVINSYPKFHFSKDTSAASSDGFGGGGDTTCSICLCEYKEAEMLRMMPECKHYFHLCCLDAWLKLNGSCPVCRNSPLPTPTSTPLSTPLSEVVPLSQYAADRRRARR.

The chain crosses the membrane as a helical span at residues 33–53 (LGFGYSIAIALGFLVLLSTVL). Residues 138–180 (CSICLCEYKEAEMLRMMPECKHYFHLCCLDAWLKLNGSCPVCR) form an RING-type; atypical zinc finger.

This sequence belongs to the RING-type zinc finger family. ATL subfamily.

Its subcellular location is the membrane. The enzyme catalyses S-ubiquitinyl-[E2 ubiquitin-conjugating enzyme]-L-cysteine + [acceptor protein]-L-lysine = [E2 ubiquitin-conjugating enzyme]-L-cysteine + N(6)-ubiquitinyl-[acceptor protein]-L-lysine.. Its pathway is protein modification; protein ubiquitination. In Arabidopsis thaliana (Mouse-ear cress), this protein is RING-H2 finger protein ATL67 (ATL67).